A 378-amino-acid polypeptide reads, in one-letter code: Histone deacetylase 8 (378 aa).

The segment at R15–G325 is histone deacetylase. D102 contributes to the substrate binding site. H144 serves as the catalytic Proton acceptor. G152 is a substrate binding site. 3 residues coordinate a divalent metal cation: D179, H181, and D268. Y307 contributes to the substrate binding site.

Belongs to the histone deacetylase family. HD type 1 subfamily. The cofactor is a divalent metal cation.

It localises to the nucleus. It is found in the chromosome. The protein resides in the cytoplasm. It carries out the reaction N(6)-acetyl-L-lysyl-[histone] + H2O = L-lysyl-[histone] + acetate. The enzyme catalyses N(6)-acetyl-L-lysyl-[protein] + H2O = L-lysyl-[protein] + acetate. The catalysed reaction is N(6)-(2E)-butenoyl-L-lysyl-[protein] + H2O = (2E)-2-butenoate + L-lysyl-[protein]. Its activity is regulated as follows. Its activity is inhibited by trichostatin A (TSA) and butyrate, 2 well known histone deacetylase inhibitors. Its function is as follows. Histone deacetylase that catalyzes the deacetylation of lysine residues on the N-terminal part of the core histones (H2A, H2B, H3 and H4). Histone deacetylation gives a tag for epigenetic repression and plays an important role in transcriptional regulation, cell cycle progression and developmental events. Histone deacetylases act via the formation of large multiprotein complexes. Also involved in the deacetylation of non-histone proteins. In addition to protein deacetylase activity, also has protein-lysine deacylase activity: acts as a protein decrotonylase by mediating decrotonylation ((2E)-butenoyl) of histones. The polypeptide is Histone deacetylase 8 (hdac8) (Danio rerio (Zebrafish)).